A 138-amino-acid chain; its full sequence is ATP synthase epsilon chain (138 aa).

The protein belongs to the ATPase epsilon chain family. As to quaternary structure, F-type ATPases have 2 components, CF(1) - the catalytic core - and CF(0) - the membrane proton channel. CF(1) has five subunits: alpha(3), beta(3), gamma(1), delta(1), epsilon(1). CF(0) has three main subunits: a, b and c.

It is found in the cell inner membrane. Functionally, produces ATP from ADP in the presence of a proton gradient across the membrane. The chain is ATP synthase epsilon chain from Cupriavidus metallidurans (strain ATCC 43123 / DSM 2839 / NBRC 102507 / CH34) (Ralstonia metallidurans).